Consider the following 528-residue polypeptide: PC4 and SFRS1-interacting protein (528 aa).

The 58-residue stretch at 7-64 (PGDLIFAKMKGYPHWPARVDEVPDGAVKPPTNKLPIFFFGTHETAFLGPKDIFPYSEN) folds into the PWWP domain. Residue lysine 75 forms a Glycyl lysine isopeptide (Lys-Gly) (interchain with G-Cter in SUMO2) linkage. Positions 86–347 (NNPKVKFSSQ…VEKKRETSMD (262 aa)) are disordered. The segment covering 92-106 (FSSQQVSTKQSNASS) has biased composition (polar residues). Residues serine 102, serine 105, and serine 106 each carry the phosphoserine modification. Basic and acidic residues predominate over residues 113–135 (KETSVSKEDTDQEEKASNEDVTK). Phosphothreonine occurs at positions 115 and 122. A Phosphoserine modification is found at serine 129. Threonine 141 is modified (phosphothreonine). The segment covering 144–153 (AARRGRKRKA) has biased composition (basic residues). The Nuclear localization signal signature appears at 146-156 (RRGRKRKAEKQ). Serine 176 and serine 205 each carry phosphoserine. Over residues 212-260 (DEDKSKKKGPEEKPPKKQLKKEEEGQKEEEKPRKEPDKKEGKKEVESKR) the composition is skewed to basic and acidic residues. Serine 270 carries the phosphoserine modification. Position 271 is a phosphothreonine (threonine 271). Residues serine 272 and serine 274 each carry the phosphoserine modification. Residues 285-300 (KRKGGRHFQAAHRRNM) are compositionally biased toward basic residues. The span at 303 to 347 (GQHEKEAADRKRKQEEQMETEQQTKDEGKKPEVKKVEKKRETSMD) shows a compositional bias: basic and acidic residues. Coiled-coil stretches lie at residues 304–332 (QHEKEAADRKRKQEEQMETEQQTKDEGKK) and 369–393 (NRCIEALDELASLQVTMQQAQKHTE). The integrase-binding domain (IBD) stretch occupies residues 338-415 (VEKKRETSMD…VSQVIMEKST (78 aa)). Phosphoserine is present on serine 432. Threonine 435 bears the Phosphothreonine mark. Serine 441 bears the Phosphoserine mark. Residues 444–471 (EQRQHEEANKTKDQGKKGPNKKLEKEQT) show a composition bias toward basic and acidic residues. A disordered region spans residues 444 to 528 (EQRQHEEANK…VSLKESTLDN (85 aa)). Over residues 472 to 492 (GTKSLNGGSDAQESNHPQHNG) the composition is skewed to polar residues. The segment covering 496–528 (EESKDSREAGSKTKTPGEEREAEVSLKESTLDN) has biased composition (basic and acidic residues). The residue at position 515 (arginine 515) is a Citrulline. Serine 520 is subject to Phosphoserine. A Phosphothreonine modification is found at threonine 525.

The protein belongs to the HDGF family. In terms of assembly, monomer. Interacts with IFRD1/PC4. Interacts (via IBD domain) with POGZ (via IBM motif) and CDCA7L (via IBM motifs). Interacts (via IBD domain) with KMT2A (via IBM motifs) with a moderate affinity whereas interacts with the KMT2A-MEN1 complex with a greater affinity; MEN1 enhances interaction of KMT2A with PSIP1. Interacts (via IBD domain) with IWS1 (via IBM motif), MED1 (via IBM motif) and DBF4 (via IBM motifs). Post-translationally, citrullinated by PADI4.

The protein localises to the nucleus. Its function is as follows. Transcriptional coactivator involved in neuroepithelial stem cell differentiation and neurogenesis. Involved in particular in lens epithelial cell gene regulation and stress responses. May play an important role in lens epithelial to fiber cell terminal differentiation. May play a protective role during stress-induced apoptosis. This is PC4 and SFRS1-interacting protein (Psip1) from Rattus norvegicus (Rat).